Reading from the N-terminus, the 684-residue chain is Glycine--tRNA ligase beta subunit (684 aa).

Belongs to the class-II aminoacyl-tRNA synthetase family. In terms of assembly, tetramer of two alpha and two beta subunits.

The protein localises to the cytoplasm. It carries out the reaction tRNA(Gly) + glycine + ATP = glycyl-tRNA(Gly) + AMP + diphosphate. In Ectopseudomonas mendocina (strain ymp) (Pseudomonas mendocina), this protein is Glycine--tRNA ligase beta subunit.